We begin with the raw amino-acid sequence, 303 residues long: N-acetyl-D-glucosamine kinase (303 aa).

ATP contacts are provided by residues 4-11 (GFDIGGTK) and 133-140 (GVGGGLVL). The Zn(2+) site is built by H157, C177, C179, and C184.

The protein belongs to the ROK (NagC/XylR) family. NagK subfamily.

The catalysed reaction is N-acetyl-D-glucosamine + ATP = N-acetyl-D-glucosamine 6-phosphate + ADP + H(+). It functions in the pathway cell wall biogenesis; peptidoglycan recycling. Its function is as follows. Catalyzes the phosphorylation of N-acetyl-D-glucosamine (GlcNAc) derived from cell-wall degradation, yielding GlcNAc-6-P. In Salmonella newport (strain SL254), this protein is N-acetyl-D-glucosamine kinase.